A 531-amino-acid chain; its full sequence is Probable cytochrome P450 4e1 (531 aa).

The heme site is built by Glu307 and Cys444.

The protein belongs to the cytochrome P450 family. Requires heme as cofactor.

The protein resides in the endoplasmic reticulum membrane. It localises to the microsome membrane. Functionally, may be involved in the metabolism of insect hormones and in the breakdown of synthetic insecticides. The polypeptide is Probable cytochrome P450 4e1 (Cyp4e1) (Drosophila melanogaster (Fruit fly)).